A 441-amino-acid chain; its full sequence is BTB/POZ domain-containing protein At2g24240 (441 aa).

The BTB domain maps to 6 to 76 (DRIKFNVGGR…LRTGDLNVPA (71 aa)).

It functions in the pathway protein modification; protein ubiquitination. Functionally, may act as a substrate-specific adapter of an E3 ubiquitin-protein ligase complex (CUL3-RBX1-BTB) which mediates the ubiquitination and subsequent proteasomal degradation of target proteins. The protein is BTB/POZ domain-containing protein At2g24240 of Arabidopsis thaliana (Mouse-ear cress).